The sequence spans 347 residues: Toluene-4-sulfonate monooxygenase system iron-sulfur subunit TsaM1 (347 aa).

One can recognise a Rieske domain in the interval 7 to 109 (WYVAAWDTEI…VVERNRLVWI (103 aa)). The [2Fe-2S] cluster site is built by Cys48, His50, Cys67, and His70.

Homotetramer. Part of the p-toluenesulfonate methyl-monooxygenase complex TsaBM, comprising the reductase TsaB and the oxygenase TsaM. [2Fe-2S] cluster is required as a cofactor.

The enzyme catalyses toluene-4-sulfonate + NADH + O2 + H(+) = 4-(hydroxymethyl)benzenesulfonate + NAD(+) + H2O. In terms of biological role, involved in the toluene-4-sulfonate degradation pathway. Does not discriminate between the sulfonate and the carboxyl substituents and can also be involved in the p-toluenecarboxylate degradation pathway. Can use toluene-4-sulfonate, p-toluate, m-toluate and 4-ethylbenzoate as substrates, but not p-xylene, toluene and p-cresol. Also catalyzes the demethylation of 4-methoxybenzoate to 4-hydroxybenzoate. In Comamonas testosteroni (Pseudomonas testosteroni), this protein is Toluene-4-sulfonate monooxygenase system iron-sulfur subunit TsaM1 (tsaM1).